Reading from the N-terminus, the 759-residue chain is 1,4-alpha-glucan branching enzyme GlgB (759 aa).

Asp-431 (nucleophile) is an active-site residue. Glu-484 functions as the Proton donor in the catalytic mechanism.

This sequence belongs to the glycosyl hydrolase 13 family. GlgB subfamily. In terms of assembly, monomer.

It carries out the reaction Transfers a segment of a (1-&gt;4)-alpha-D-glucan chain to a primary hydroxy group in a similar glucan chain.. The protein operates within glycan biosynthesis; glycogen biosynthesis. In terms of biological role, catalyzes the formation of the alpha-1,6-glucosidic linkages in glycogen by scission of a 1,4-alpha-linked oligosaccharide from growing alpha-1,4-glucan chains and the subsequent attachment of the oligosaccharide to the alpha-1,6 position. The chain is 1,4-alpha-glucan branching enzyme GlgB from Prochlorococcus marinus (strain MIT 9211).